The chain runs to 150 residues: Large ribosomal subunit protein bL9 (150 aa).

Belongs to the bacterial ribosomal protein bL9 family.

Binds to the 23S rRNA. The protein is Large ribosomal subunit protein bL9 of Aromatoleum aromaticum (strain DSM 19018 / LMG 30748 / EbN1) (Azoarcus sp. (strain EbN1)).